The chain runs to 1075 residues: Protein nervous wreck (1075 aa).

The F-BAR domain occupies 11 to 289 (VKFLKNLHTE…QAQQLTREYN (279 aa)). Disordered stretches follow at residues 361–381 (LRDSGQRTDPNDPNGPDLDTK) and 431–536 (SASS…DEPI). Residues 431 to 453 (SASSISMRTDASGQGENPSSDSF) are compositionally biased toward polar residues. Basic and acidic residues predominate over residues 469 to 482 (PKQEQQLSRDRTFS). Low complexity predominate over residues 493-512 (SAAAASSAAAASSSMMASSA). 2 consecutive SH3 domains span residues 542 to 603 (EAIF…IDQE) and 658 to 721 (SDVE…ECDE). Disordered regions lie at residues 722–747 (MGEPLSEGGDESPPPTAAPTFALPPA), 769–837 (SQDT…EKGA), and 864–917 (GADK…EGNA). 2 stretches are compositionally biased toward pro residues: residues 733–747 (SPPPTAAPTFALPPA) and 809–818 (QPPPSLPPPQ). The segment covering 819–837 (LAKAGGSAPGSGSKVEKGA) has biased composition (low complexity). Residues 883–897 (VSKEQPAEVAKKPDI) are compositionally biased toward basic and acidic residues.

As to quaternary structure, homodimer. Interacts (via SH3 domain 1) with WASp. Interacts (via SH3 domain 1) with shi/dynamin. Interacts (via SH3 domain 2) with Dap160. Interacts (via F-BAR domain) with SH3PX1. Interacts (via SH3 domain 2) with Snx16. Identified in a complex with Syn and Syt1. Detected in larval body wall muscle. Detected at the neuromuscular junction, on motoneuron axons and axon terminals, at synaptic boutons in the periactive zone surrounding the synapse (at protein level). Detected on motoneuron axons and axon terminals, at synaptic boutons in the periactive zone surrounding the synapse.

Its subcellular location is the endomembrane system. It localises to the synapse. The protein resides in the cell projection. The protein localises to the axon. It is found in the presynaptic cell membrane. Its subcellular location is the cytoplasmic vesicle. It localises to the secretory vesicle. The protein resides in the synaptic vesicle. The protein localises to the recycling endosome. Its function is as follows. Adapter protein that provides a link between vesicular membrane traffic and the actin assembly machinery. Acts together with Cdc42 to stimulate actin nucleation mediated by WASp and the ARP2/3 complex. Binds to membranes enriched in phosphatidylinositol 4,5-bisphosphate and causes local membrane deformation. Required for normal structure and function of synapses at the neuromuscular junction. Plays a role in synaptic vesicle trafficking. Required for the release of a normal number of synaptic vesicles per action potential. This chain is Protein nervous wreck, found in Drosophila melanogaster (Fruit fly).